Here is a 204-residue protein sequence, read N- to C-terminus: Large ribosomal subunit protein eL15 (204 aa).

Residues 161–180 are disordered; the sequence is MRGLTSAGKKSRGLGKGHKF. Residues 169 to 180 show a composition bias toward basic residues; it reads KKSRGLGKGHKF.

Belongs to the eukaryotic ribosomal protein eL15 family. Component of the large ribosomal subunit.

The protein resides in the cytoplasm. Its function is as follows. Component of the large ribosomal subunit. The ribosome is a large ribonucleoprotein complex responsible for the synthesis of proteins in the cell. The protein is Large ribosomal subunit protein eL15 (rpl15) of Ictalurus punctatus (Channel catfish).